We begin with the raw amino-acid sequence, 804 residues long: MSFSHQEIEKKWQAFWEENKTFKTDEQAEGPHFYALDMFPYPSGAGLHVGHPEGYTATDILARMKRMQGYNVLHPMGWDAFGLPAEQYALDTGKHPATFTKQNIDTFKRQIKELGFSYDWDREISTTDPHYYKWTQWIFLKLYEKGLAYIDEVAVNWCPALGTVLANEEIVDGVSERGGHPVERRPMKQWVLRITAYAERLLEDLEELEWPESLKDMQRNWIGKSEGAEVTFKINEHSVNVFTTRPDTLFGATYMVLAPEHKLVTEITTDEQKEAVEAYQKQVALKSDIERTDLAKEKTGAFTGAYAINPVNGEKIPVWIADYVLISYGTGAVMAVPAHDERDFEFANAFGLPIKEVVAGGDVSKAAYTGDGEHVNSDFLNGLNKQEAVEKMIVWLEENGAGQRKVTYRLRDWLFSRQRYWGEPIPIIHWEDGSMSALDESELPLVLPDLEEIKPSGTGESPLANAKDWLEVVDPKTGMRGRRETNTMPQWAGSCWYYLRYIDPTNDEALADPEKLKNWLPVDTYIGGAEHAVLHLLYARFWHKFLYDIGVVPTKEPFQKVFNQGMILGENNEKMSKSKGNVVNPDEIIASHGADTLRLYEMFMGPLDASVAWSTNGLDGSRRFLERVWRLIVNEETGKLNSNVKDVEGNEAFVRTYHQTVKKVTEDFAELRFNTGISQLMVFVNEGNKQEVLPKALIEGFVKLLSPVAPHIAEELWEKLGHTDTITYEAWPTYDESLLVENEVEVVVQMNGKVKTKLVINKGASKEEMEAAALADEKVQAAIGEKTIRKVIAVPGKLVNIVVG.

The 'HIGH' region signature appears at 40–51 (PYPSGAGLHVGH). A 'KMSKS' region motif is present at residues 574–578 (KMSKS). An ATP-binding site is contributed by Lys-577.

It belongs to the class-I aminoacyl-tRNA synthetase family.

The protein localises to the cytoplasm. The enzyme catalyses tRNA(Leu) + L-leucine + ATP = L-leucyl-tRNA(Leu) + AMP + diphosphate. The polypeptide is Leucine--tRNA ligase (Shouchella clausii (strain KSM-K16) (Alkalihalobacillus clausii)).